Here is a 438-residue protein sequence, read N- to C-terminus: 3-phosphoshikimate 1-carboxyvinyltransferase (438 aa).

Lys23, Ser24, and Arg28 together coordinate 3-phosphoshikimate. Lys23 provides a ligand contact to phosphoenolpyruvate. Positions 94 and 122 each coordinate phosphoenolpyruvate. Ser167, Gln169, Asp321, and Lys348 together coordinate 3-phosphoshikimate. Residue Gln169 participates in phosphoenolpyruvate binding. The active-site Proton acceptor is the Asp321. Residues Arg352 and Arg393 each coordinate phosphoenolpyruvate.

The protein belongs to the EPSP synthase family. As to quaternary structure, monomer.

The protein resides in the cytoplasm. It carries out the reaction 3-phosphoshikimate + phosphoenolpyruvate = 5-O-(1-carboxyvinyl)-3-phosphoshikimate + phosphate. The protein operates within metabolic intermediate biosynthesis; chorismate biosynthesis; chorismate from D-erythrose 4-phosphate and phosphoenolpyruvate: step 6/7. Functionally, catalyzes the transfer of the enolpyruvyl moiety of phosphoenolpyruvate (PEP) to the 5-hydroxyl of shikimate-3-phosphate (S3P) to produce enolpyruvyl shikimate-3-phosphate and inorganic phosphate. The chain is 3-phosphoshikimate 1-carboxyvinyltransferase from Helicobacter hepaticus (strain ATCC 51449 / 3B1).